Reading from the N-terminus, the 475-residue chain is Probable phenylalanine--tRNA ligase alpha subunit (475 aa).

Positions 2–151 (TAVAQKIIEN…KRKLVSRRKK (150 aa)) are contains the major tRNA-Phe binding sites. L-phenylalanine contacts are provided by residues Thr309, 351–353 (QVE), and Tyr391. Position 393 (Glu393) interacts with Mg(2+). Residue Phe417 coordinates L-phenylalanine.

This sequence belongs to the class-II aminoacyl-tRNA synthetase family. Phe-tRNA synthetase alpha subunit type 2 subfamily. In terms of assembly, tetramer of two alpha and two beta subunits. Requires Mg(2+) as cofactor.

The protein localises to the cytoplasm. The enzyme catalyses tRNA(Phe) + L-phenylalanine + ATP = L-phenylalanyl-tRNA(Phe) + AMP + diphosphate + H(+). The polypeptide is Probable phenylalanine--tRNA ligase alpha subunit (Encephalitozoon cuniculi (strain GB-M1) (Microsporidian parasite)).